A 1040-amino-acid chain; its full sequence is Chromatin modification-related protein rik1 (1040 aa).

It belongs to the DDB1 family. As to quaternary structure, component of the Clr4 methyltransferase complex (ClrC) composed of at least clr4, rik1, pcu4, rbx1, raf1 and raf2. The cullin pcu4, rik1, raf1, raf2 and the ring-box protein rbx1 are components of an E3 ubiquitin ligase, whose activity is essential for heterochromatin assembly.

The protein localises to the nucleus. Its subcellular location is the cytoplasm. It is found in the cytoskeleton. The protein resides in the microtubule organizing center. It localises to the spindle pole body. The protein localises to the chromosome. Its function is as follows. Component of the Clr4 methyltransferase complex (ClrC) which contributes to the establishment of heterochromatin by specifically methylating histone H3 to form H3K9me. ClrC preferentially ubiquitylates H3K14 and ClrC-mediated H3 ubiquitination promotes clr4 methyltransferase activity for the methylation of H3K9. H3K9me represents a specific tag for epigenetic transcriptional repression by recruiting swi6/HP1 to methylated histones which leads to transcriptional silencing within centromeric heterochromatin, telomeric regions and at the silent mating-type loci. Rik1 is involved in the RNAi-mediated targeting of ClrC to heterochromatic repeat elements. Rik1 also has a function in meiotic telomere clustering. This Schizosaccharomyces pombe (strain 972 / ATCC 24843) (Fission yeast) protein is Chromatin modification-related protein rik1 (rik1).